We begin with the raw amino-acid sequence, 188 residues long: MSRAQDRIGTWIGWTFFADLANALTLTFGYMFSSPVTMQYPDTEKWLPYSRYRGHHFLKRDEEGEIKCVACELCARICPCDCIEVVPYEDEKGNRHPAKFEIDTARCLFCGLCEDACPADAIALGQQYEFSSFSSADLVIGRDDLLAKPGKAATGGGVVSARLNTKKDVLVETKEMQGYNWWRNIRRT.

4Fe-4S ferredoxin-type domains follow at residues 56-88 (HFLKRDEEGEIKCVACELCARICPCDCIEVVPY) and 98-127 (AKFEIDTARCLFCGLCEDACPADAIALGQQ). [4Fe-4S] cluster is bound by residues cysteine 68, cysteine 71, cysteine 74, cysteine 78, cysteine 107, cysteine 110, cysteine 113, and cysteine 117.

This sequence belongs to the complex I 23 kDa subunit family. NDH-1 is composed of 14 different subunits. Subunits NuoA, H, J, K, L, M, N constitute the membrane sector of the complex. [4Fe-4S] cluster serves as cofactor.

It localises to the cell inner membrane. It carries out the reaction a quinone + NADH + 5 H(+)(in) = a quinol + NAD(+) + 4 H(+)(out). Functionally, NDH-1 shuttles electrons from NADH, via FMN and iron-sulfur (Fe-S) centers, to quinones in the respiratory chain. The immediate electron acceptor for the enzyme in this species is believed to be ubiquinone. Couples the redox reaction to proton translocation (for every two electrons transferred, four hydrogen ions are translocated across the cytoplasmic membrane), and thus conserves the redox energy in a proton gradient. The sequence is that of NADH-quinone oxidoreductase subunit I 2 from Rhizobium etli (strain ATCC 51251 / DSM 11541 / JCM 21823 / NBRC 15573 / CFN 42).